The primary structure comprises 284 residues: Putative mitochondrial carrier protein PET8 (284 aa).

Solcar repeat units follow at residues 2-75, 92-178, and 192-271; these read NTFF…MKVK, IDTT…LKKT, and KGAI…VHSL. The next 6 helical transmembrane spans lie at 5-25, 50-70, 98-118, 153-169, 194-214, and 252-272; these read FLSL…FFPI, GLGS…ISYD, MLSS…AEVV, GWST…CIQF, AICG…LDFL, and MWIS…HSLL.

It belongs to the mitochondrial carrier (TC 2.A.29) family.

The protein localises to the mitochondrion inner membrane. The protein is Putative mitochondrial carrier protein PET8 (PET8) of Saccharomyces cerevisiae (strain ATCC 204508 / S288c) (Baker's yeast).